Here is a 492-residue protein sequence, read N- to C-terminus: Malonate-semialdehyde dehydrogenase (492 aa).

Residues Phe-156, Lys-180, Glu-183, Lys-184, Ser-233, and Thr-255 each coordinate NAD(+). Residue Cys-288 is the Nucleophile of the active site. Glu-387 contacts NAD(+).

The protein belongs to the aldehyde dehydrogenase family. IolA subfamily. Homotetramer.

The catalysed reaction is 3-oxopropanoate + NAD(+) + CoA + H2O = hydrogencarbonate + acetyl-CoA + NADH + H(+). It carries out the reaction 2-methyl-3-oxopropanoate + NAD(+) + CoA + H2O = propanoyl-CoA + hydrogencarbonate + NADH + H(+). It functions in the pathway polyol metabolism; myo-inositol degradation into acetyl-CoA; acetyl-CoA from myo-inositol: step 7/7. In terms of biological role, catalyzes the oxidation of malonate semialdehyde (MSA) and methylmalonate semialdehyde (MMSA) into acetyl-CoA and propanoyl-CoA, respectively. Is involved in a myo-inositol catabolic pathway. Bicarbonate, and not CO2, is the end-product of the enzymatic reaction. This Lacticaseibacillus casei (Lactobacillus casei) protein is Malonate-semialdehyde dehydrogenase.